A 194-amino-acid polypeptide reads, in one-letter code: Small ribosomal subunit protein uS4c (194 aa).

The 61-residue stretch at 84 to 144 (MRLDTLLYRT…KEILKSLNDK (61 aa)) folds into the S4 RNA-binding domain.

It belongs to the universal ribosomal protein uS4 family. As to quaternary structure, part of the 30S ribosomal subunit. Contacts protein S5. The interaction surface between S4 and S5 is involved in control of translational fidelity.

The protein resides in the plastid. The protein localises to the chloroplast. Its function is as follows. One of the primary rRNA binding proteins, it binds directly to 16S rRNA where it nucleates assembly of the body of the 30S subunit. In terms of biological role, with S5 and S12 plays an important role in translational accuracy. In Bigelowiella natans (Pedinomonas minutissima), this protein is Small ribosomal subunit protein uS4c (rps4).